Consider the following 138-residue polypeptide: Large ribosomal subunit protein uL16 (138 aa).

Belongs to the universal ribosomal protein uL16 family. As to quaternary structure, part of the 50S ribosomal subunit.

Its function is as follows. Binds 23S rRNA and is also seen to make contacts with the A and possibly P site tRNAs. In Rubrobacter xylanophilus (strain DSM 9941 / JCM 11954 / NBRC 16129 / PRD-1), this protein is Large ribosomal subunit protein uL16.